The chain runs to 220 residues: Miraculin (220 aa).

Residues 1–29 (MKELTMLSLSFFFVSALLAAAANPLLSAA) form the signal peptide. Asparagine 71 is a glycosylation site (N-linked (GlcNAc...) asparagine). 3 disulfides stabilise this stretch: cysteine 76-cysteine 121, cysteine 177-cysteine 188, and cysteine 181-cysteine 184. The N-linked (GlcNAc...) asparagine glycan is linked to asparagine 215.

It belongs to the protease inhibitor I3 (leguminous Kunitz-type inhibitor) family. Homotetramer; dimer of homodimer. In terms of processing, glycosylated; contains as much as 13,9% of sugars (glucosamine, mannose, galactose, xylose, and fucose). As to expression, expressed in fruit pulp after pollination. Not expressed in seeds, stems or leaves.

Functionally, miraculin has the property of modifying a sour taste into a sweet taste. This alteration of taste perception persists for many minutes. This Synsepalum dulcificum (Miracle fruit) protein is Miraculin.